The chain runs to 128 residues: MAAADVAYAPPMKSGKIGFESSQEVQHRIRITLSSKSVKNLEKVCGDLVKGAKDKSLKVKGPVRMPTKVLHITTRKSPCGEGTNTWDRFEMRVHKRVIDLVSSADVVKQITSITIEPGVEVEVTISDQ.

This sequence belongs to the universal ribosomal protein uS10 family.

This Oryza sativa subsp. japonica (Rice) protein is Small ribosomal subunit protein uS10 (RPS20).